Consider the following 384-residue polypeptide: N-acetylneuraminate epimerase (384 aa).

Positions 1–29 (MGMQMKNFKKMMTLMALCLSVAITTSGYA) are cleaved as a signal peptide. 7 Kelch repeats span residues 51–95 (VIYV…VFLN), 97–149 (ELYV…VKLN), 151–184 (TMVL…KVIY), 185–230 (NYFN…VMEN), 233–282 (LMLI…LAGA), 304–353 (QNYT…SYGD), and 355–384 (VFLI…LLIK). Residue Glu-239 is the Proton acceptor of the active site.

The protein belongs to the NanM family. As to quaternary structure, homodimer.

The protein resides in the periplasm. The catalysed reaction is N-acetyl-alpha-neuraminate = N-acetyl-beta-neuraminate. Its function is as follows. Converts alpha-N-acetylneuranimic acid (Neu5Ac) to the beta-anomer, accelerating the equilibrium between the alpha- and beta-anomers. Probably facilitates sialidase-negative bacteria to compete successfully for limited amounts of extracellular Neu5Ac, which is likely taken up in the beta-anomer. In addition, the rapid removal of sialic acid from solution might be advantageous to the bacterium to damp down host responses. The polypeptide is N-acetylneuraminate epimerase (Salmonella enteritidis PT4 (strain P125109)).